The primary structure comprises 784 residues: Copal-8-ol diphosphate hydratase TPSSA9, chloroplastic (784 aa).

Arg-240 provides a ligand contact to substrate. 2 residues coordinate Mg(2+): Asp-372 and Asp-374. The DXDD motif motif lies at 372-375 (DIDD). Arg-459 lines the substrate pocket.

The protein belongs to the terpene synthase family.

The protein resides in the plastid. It localises to the chloroplast. It carries out the reaction (2E,6E,10E)-geranylgeranyl diphosphate + H2O = 8-hydroxycopalyl diphosphate. Its pathway is secondary metabolite biosynthesis; terpenoid biosynthesis. In terms of biological role, involved in the biosynthesis of labdane-type diterpenoid including sclareol, a diterpene-diol that is used as fragrance and flavoring, and has anticancer effects (able to kill leukemic and colon cancer cells by apoptosis). Sclareol can also be used as synthesis precursor of ambergris substitution fragance products such as ambrox. Terpene synthase that produces 8-hydroxycopalyl diphosphate from geranylgeranyl diphosphate (GGPP). The sequence is that of Copal-8-ol diphosphate hydratase TPSSA9, chloroplastic from Salvia sclarea (Clary sage).